A 110-amino-acid polypeptide reads, in one-letter code: MGGKKKPTLSQLAKKAEKEKAQQAQKAKKEVKKEETPAKRTIQVLDEKVFQAIAKEVQNMRVITPYEIASKYGIKMSVAFKVLRNLKERGDLVLVAKGHRTEIYVPAKRS.

A disordered region spans residues 1 to 38 (MGGKKKPTLSQLAKKAEKEKAQQAQKAKKEVKKEETPA). Over residues 14 to 38 (KKAEKEKAQQAQKAKKEVKKEETPA) the composition is skewed to basic and acidic residues.

This sequence belongs to the eukaryotic ribosomal protein eS25 family.

In Pyrobaculum aerophilum (strain ATCC 51768 / DSM 7523 / JCM 9630 / CIP 104966 / NBRC 100827 / IM2), this protein is Small ribosomal subunit protein eS25 (rps25e).